Here is a 578-residue protein sequence, read N- to C-terminus: NADPH oxidase 4 (578 aa).

Topologically, residues 1–16 (MALSWRSWLANEGVKH) are cytoplasmic. Residues 17–37 (LCLLVWLSLNVLLFWKTFLLY) form a helical membrane-spanning segment. At 38 to 62 (NQGPEYYYIHQMLGLGLCLSRASAS) the chain is on the extracellular side. One can recognise a Ferric oxidoreductase domain in the interval 58-303 (RASASVLNLN…YCAERLYRCI (246 aa)). A helical transmembrane segment spans residues 63–83 (VLNLNCSLILLPMCRTVLAYL). At 84 to 104 (RGSQKVPSRRTRRLLDKSKTL) the chain is on the cytoplasmic side. Residues 105–125 (HITCGITICIFSGVHVAAHLV) traverse the membrane as a helical segment. At 126–154 (NALNFSVNYSEHFLALNAARYQNEDPRKL) the chain is on the extracellular side. N-linked (GlcNAc...) asparagine glycosylation is present at asparagine 133. Residues 155-175 (LFTTVPGLTGVCMVVVLFLMV) form a helical membrane-spanning segment. At 176-188 (TASTYAIRVSNYD) the chain is on the cytoplasmic side. Residues 189–209 (IFWYTHNLFFVFYMLLLLHVS) form a helical membrane-spanning segment. Residues 210-424 (GGLLKYQTNL…SPFEESLNYE (215 aa)) lie on the Extracellular side of the membrane. The E-loop; essential for H2O2 generating catalytic activity stretch occupies residues 218 to 273 (NLDTHPPGCISLNRTPSQNMSIADYVSEHFHGSLPGGFSKLEDHYQKTLVKICLEE). Residues 248–575 (HGSLPGGFSK…YGTKFEYNKE (328 aa)) form a mediates interaction with TLR4 region. An FAD-binding FR-type domain is found at 304-419 (RSNKPVTIIS…DGPFGSPFEE (116 aa)). The helical transmembrane segment at 425–445 (VSLCVAGGIGVTPFASILNTL) threads the bilayer. Residues 446 to 578 (LDDWKPYKLR…KFEYNKESFS (133 aa)) are Cytoplasmic-facing.

Interacts with TLR4. Interacts with, relocalizes and stabilizes CYBA/p22phox. Interacts with protein disulfide isomerase. Interacts with PPP1R15A. Interacts with LRRC8A; this interaction prevents the ubiquitin-mediated degradation of LRRC8A. Heme serves as cofactor. Post-translationally, N-glycosylation is required for the function. As to expression, expressed in vascular smooth muscle.

The protein localises to the cytoplasm. It is found in the endoplasmic reticulum membrane. The protein resides in the cell membrane. Its subcellular location is the cell junction. It localises to the focal adhesion. The protein localises to the nucleus. It catalyses the reaction NADPH + 2 O2 = 2 superoxide + NADP(+) + H(+). It carries out the reaction NADPH + O2 + H(+) = H2O2 + NADP(+). Activated by insulin. Inhibited by diphenylene iodonium. Inhibited by plumbagin. Activated by phorbol 12-myristate 13-acetate (PMA). NADPH oxidase that catalyzes predominantly the reduction of oxygen to H2O2. Can also catalyze to a smaller extent, the reduction of oxygen to superoxide. May function as an oxygen sensor regulating the KCNK3/TASK-1 potassium channel and HIF1A activity. May regulate insulin signaling cascade. May play a role in apoptosis, bone resorption and lipolysaccharide-mediated activation of NFKB. May produce superoxide in the nucleus and play a role in regulating gene expression upon cell stimulation. Promotes ferroptosis, reactive oxygen species production and reduced glutathione (GSH) levels by activating NLRP3 inflammasome activation and cytokine release. This is NADPH oxidase 4 (Nox4) from Rattus norvegicus (Rat).